The chain runs to 189 residues: MAQYSTNEFKGGLKIMLDGDPYTIVENEFVKPGKGQAFNRVKVRNLKTGKVIDRTFKSGESVEAADVLETEMQFLYSDGEFFHMMDPETFEQKAAPASAVGDAAKWLKEQAMCTVILWNDEPLTVEPPNFVELRVVETDPGVRGDTSGGGGKPATLETGAVVRVPLFIEEGELLKVDTRSGEYVGRVKG.

Lys-34 is modified (N6-(3,6-diaminohexanoyl)-5-hydroxylysine).

Belongs to the elongation factor P family. May be beta-lysylated on the epsilon-amino group of Lys-34 by the combined action of EpmA and EpmB, and then hydroxylated on the C5 position of the same residue by EpmC (if this protein is present). Lysylation is critical for the stimulatory effect of EF-P on peptide-bond formation. The lysylation moiety may extend toward the peptidyltransferase center and stabilize the terminal 3-CCA end of the tRNA. Hydroxylation of the C5 position on Lys-34 may allow additional potential stabilizing hydrogen-bond interactions with the P-tRNA.

Its subcellular location is the cytoplasm. The protein operates within protein biosynthesis; polypeptide chain elongation. In terms of biological role, involved in peptide bond synthesis. Alleviates ribosome stalling that occurs when 3 or more consecutive Pro residues or the sequence PPG is present in a protein, possibly by augmenting the peptidyl transferase activity of the ribosome. Modification of Lys-34 is required for alleviation. The protein is Elongation factor P of Alkalilimnicola ehrlichii (strain ATCC BAA-1101 / DSM 17681 / MLHE-1).